An 84-amino-acid chain; its full sequence is Neurotoxin BmK-M10 (84 aa).

Residues 1-19 form the signal peptide; the sequence is MNYLVMISFALLLMKGVES. Positions 21 to 83 constitute an LCN-type CS-alpha/beta domain; that stretch reads RDAYIAKPEN…VPIRVPGKCQ (63 aa). Disulfide bonds link Cys-31-Cys-82, Cys-35-Cys-55, Cys-41-Cys-65, and Cys-45-Cys-67. Residue Arg-84 is a propeptide, removed by a carboxypeptidase.

Expressed by the venom gland.

The protein resides in the secreted. Binds to voltage-dependent sodium channels (Nav) and voltage-dependent delayed rectifier potassium channels and inhibits the inactivation of the activated channels, thereby blocking neuronal transmission. Administration to mice at a dosage of 0.8 mg/kg produces an analgesic effect. This Olivierus martensii (Manchurian scorpion) protein is Neurotoxin BmK-M10.